Here is a 270-residue protein sequence, read N- to C-terminus: Cytochrome c oxidase subunit 3 (270 aa).

7 helical membrane passes run 22–42 (PWPIVVSFSLLSLALSLGLTM), 46–66 (IGEMYLVNLALLVVLGSGVLW), 88–108 (INIGFLLFVLSEVLIFSALFW), 128–148 (VGITAVQPTELPLLNTIILLA), 168–188 (SLSGLLITTWLIIIFVICQYI), 205–225 (VFFAGTGLHFLHMVMLAIMLA), and 248–268 (IIYLHVLDVIWLFLYIVFYWW).

This sequence belongs to the cytochrome c oxidase subunit 3 family. Component of the cytochrome c oxidase (complex IV, CIV), a multisubunit enzyme composed of a catalytic core of 3 subunits and several supernumerary subunits. The complex exists as a monomer or a dimer and forms supercomplexes (SCs) in the inner mitochondrial membrane with ubiquinol-cytochrome c oxidoreductase (cytochrome b-c1 complex, complex III, CIII).

Its subcellular location is the mitochondrion inner membrane. It carries out the reaction 4 Fe(II)-[cytochrome c] + O2 + 8 H(+)(in) = 4 Fe(III)-[cytochrome c] + 2 H2O + 4 H(+)(out). Component of the cytochrome c oxidase, the last enzyme in the mitochondrial electron transport chain which drives oxidative phosphorylation. The respiratory chain contains 3 multisubunit complexes succinate dehydrogenase (complex II, CII), ubiquinol-cytochrome c oxidoreductase (cytochrome b-c1 complex, complex III, CIII) and cytochrome c oxidase (complex IV, CIV), that cooperate to transfer electrons derived from NADH and succinate to molecular oxygen, creating an electrochemical gradient over the inner membrane that drives transmembrane transport and the ATP synthase. Cytochrome c oxidase is the component of the respiratory chain that catalyzes the reduction of oxygen to water. Electrons originating from reduced cytochrome c in the intermembrane space (IMS) are transferred via the dinuclear copper A center (CU(A)) of subunit 2 and heme A of subunit 1 to the active site in subunit 1, a binuclear center (BNC) formed by heme A3 and copper B (CU(B)). The BNC reduces molecular oxygen to 2 water molecules using 4 electrons from cytochrome c in the IMS and 4 protons from the mitochondrial matrix. This chain is Cytochrome c oxidase subunit 3 (COX3), found in Vanderwaltozyma polyspora (strain ATCC 22028 / DSM 70294 / BCRC 21397 / CBS 2163 / NBRC 10782 / NRRL Y-8283 / UCD 57-17) (Kluyveromyces polysporus).